We begin with the raw amino-acid sequence, 443 residues long: ATP-dependent protease ATPase subunit HslU (443 aa).

ATP-binding positions include isoleucine 18, 60–65 (GVGKTE), aspartate 256, glutamate 321, and arginine 393.

The protein belongs to the ClpX chaperone family. HslU subfamily. As to quaternary structure, a double ring-shaped homohexamer of HslV is capped on each side by a ring-shaped HslU homohexamer. The assembly of the HslU/HslV complex is dependent on binding of ATP.

It localises to the cytoplasm. Its function is as follows. ATPase subunit of a proteasome-like degradation complex; this subunit has chaperone activity. The binding of ATP and its subsequent hydrolysis by HslU are essential for unfolding of protein substrates subsequently hydrolyzed by HslV. HslU recognizes the N-terminal part of its protein substrates and unfolds these before they are guided to HslV for hydrolysis. In Pasteurella multocida (strain Pm70), this protein is ATP-dependent protease ATPase subunit HslU.